Reading from the N-terminus, the 885-residue chain is Protein arg11, mitochondrial (885 aa).

The transit peptide at 1-59 (MLIELQQIVKSGLVRNGAKHCTKRSLLCSNASVIASKRFQGSFAPGQQQPLNPLAKPIE) directs the protein to the mitochondrion. The region spanning 346–499 (FVINKHDSLD…SDKPFADAII (154 aa)) is the N-acetyltransferase domain. Residues 503–523 (STKPPTASSTTNNPSSSQINQ) show a composition bias toward low complexity. Residues 503–532 (STKPPTASSTTNNPSSSQINQKRSYSTSSL) form a disordered region. Cys703 is a catalytic residue.

It in the N-terminal section; belongs to the acetylglutamate kinase family. In the C-terminal section; belongs to the NAGSA dehydrogenase family. Post-translationally, the protein precursor is probably cleaved into the two biologically active enzymes, the kinase and the reductase.

It localises to the mitochondrion. The enzyme catalyses N-acetyl-L-glutamate 5-semialdehyde + phosphate + NADP(+) = N-acetyl-L-glutamyl 5-phosphate + NADPH + H(+). The catalysed reaction is N-acetyl-L-glutamate + ATP = N-acetyl-L-glutamyl 5-phosphate + ADP. It functions in the pathway amino-acid biosynthesis; L-arginine biosynthesis; N(2)-acetyl-L-ornithine from L-glutamate: step 2/4. Its pathway is amino-acid biosynthesis; L-arginine biosynthesis; N(2)-acetyl-L-ornithine from L-glutamate: step 3/4. Its activity is regulated as follows. The kinase activity is inhibited by arginine. In Schizosaccharomyces pombe (strain 972 / ATCC 24843) (Fission yeast), this protein is Protein arg11, mitochondrial (arg11).